The chain runs to 357 residues: Peptide chain release factor 1 (357 aa).

An N5-methylglutamine modification is found at glutamine 234.

Belongs to the prokaryotic/mitochondrial release factor family. Methylated by PrmC. Methylation increases the termination efficiency of RF1.

The protein localises to the cytoplasm. Its function is as follows. Peptide chain release factor 1 directs the termination of translation in response to the peptide chain termination codons UAG and UAA. The protein is Peptide chain release factor 1 of Alkaliphilus oremlandii (strain OhILAs) (Clostridium oremlandii (strain OhILAs)).